A 396-amino-acid polypeptide reads, in one-letter code: MTTLNPYFGEFGGMYVPQILVPALKQLEDAFVSAQLDPEFQAAFQDLLKNYAGRPTALTLCQNLTKGTKTKLYLKREDLLHGGAHKTNQVLGQALLAKRMGKTEIIAETGAGQHGVASALACALLGLKCRIYMGAKDIERQSPNVFRMRLMGAEVIPVHSGSSTLKDACNEALRDWSGTYETAHYMLGTAAGPHPYPTIVREFQRMIGEETKAQILEKEGRLPDAVLACVGGGSNAIGMFADFIDEPDVGLIGVEPAGLGIETGQHGAPLKHGKVGIYFGMKSPMMQTSDGQIEESYSISAGLDFPSVGPQHAYLNSIGRADYVSITDDEALDAFKTLSCKEGIIPALESSHALAHALKMIKADPDKEQILVVNLSGRGDKDIFTVHDILKARGEI.

An N6-(pyridoxal phosphate)lysine modification is found at Lys-86.

It belongs to the TrpB family. Tetramer of two alpha and two beta chains. The cofactor is pyridoxal 5'-phosphate.

The catalysed reaction is (1S,2R)-1-C-(indol-3-yl)glycerol 3-phosphate + L-serine = D-glyceraldehyde 3-phosphate + L-tryptophan + H2O. It participates in amino-acid biosynthesis; L-tryptophan biosynthesis; L-tryptophan from chorismate: step 5/5. Functionally, the beta subunit is responsible for the synthesis of L-tryptophan from indole and L-serine. This is Tryptophan synthase beta chain from Yersinia pseudotuberculosis serotype O:1b (strain IP 31758).